The sequence spans 980 residues: Zinc finger BED domain-containing protein 6 (980 aa).

The required for nucleolar localization stretch occupies residues 1 to 89; the sequence is MSVCTLSVPV…ILAKKFSKDL (89 aa). A disordered region spans residues 89-109; it reads LGSGRPVADAPASLASGAPEQ. A BED-type 1 zinc finger spans residues 130 to 187; it reads AKTSIVWHFFHVDPQYTWRAICNLCEKSVSRGKPGSHLGTSTLQRHLQARHSPHWTRA. Zn(2+) contacts are provided by C151, C154, H175, and H180. The disordered stretch occupies residues 201-239; that stretch reads LDLSLSPPSPGSNGSFEYIPTDSVDENRMGKKRDKSASD. Low complexity predominate over residues 203–215; it reads LSLSPPSPGSNGS. Residues 265 to 322 form a BED-type 2 zinc finger; sequence AKTSAVWNFFYTDPQHISRAVCNICKRSVSRGRPGSHLGTSTLQRHLQATHPIHWAVA. Residues C286, C289, H310, and H315 each coordinate Zn(2+). The interval 328–397 is disordered; sequence AIGNGLDETE…ADQDNPVHAQ (70 aa). Acidic residues predominate over residues 360–373; sequence TAEDLSDSDTDEPP. Position 383 is a phosphoserine (S383). Residues 868–950 form an HATC (Hobo-Ac-Tam3) domain region; sequence VVDEYFKEKY…EQLIFLKMNL (83 aa).

In terms of tissue distribution, expressed in pancreatic islet cells and weakly expressed in surrounding exocrine tissues (at protein level). Expressed in muscle and brain (at protein level). Shows broad tissue distribution with expression detected in brain, stomach, intestine, heart, kidney, liver, lung, skeletal muscle, ovary, spleen, tail and testis.

The protein localises to the nucleus. Its subcellular location is the nucleolus. It is found in the cytoplasm. Functionally, transcriptional repressor which binds to the consensus sequence 5'-GCTCGC-3', transcription regulation may be tissue-specific. Regulates the expression of target genes such as: IGF2, PGAP6/TMEM8, ENHO, and PIANP. Acts as a transcriptional repressor of growth factor IGF2, thereby negatively regulating postnatal growth of muscles and internal organs, especially in females. Negatively regulates myoblast differentiation and myoblast mitochondrial activity via its regulation of IGF2 transcription. Negatively regulates the cell cycle of myoblasts, potentially via transcriptional regulation of the E2F family of transcription factors such as: E2F1 and E2F2. Positively regulates the cell cycle and survival of pancreatic beta cells. Binds to the CDH2 gene and may directly repress CDH2 transcription. Probably by controlling CDH2 expression, regulates pancreatic beta cell adhesion, and formation of cell-to-cell junctions between pancreatic beta cells and neural crest stem cells. May also play a role in embryonic beta cell differentiation. May play a role in insulin sensitivity and glucose clearance. This is Zinc finger BED domain-containing protein 6 from Mus musculus (Mouse).